The chain runs to 204 residues: Capsid protein (204 aa).

Residues 183-194 (EFSSESPVTSLK) are compositionally biased toward polar residues. The segment at 183–204 (EFSSESPVTSLKQLGRGLGTGR) is disordered.

It belongs to the closteroviridae capsid protein family.

The protein localises to the virion. Component that constitutes the body part of the virion. Also acts as a movement protein that is involved in local cell-cell movement via plamodesmata. At least five viral proteins, CP, CPm, p6, p64 and Hsp70h are essential for cell-cell movement. This chain is Capsid protein, found in Beet yellows virus (isolate Ukraine) (BYV).